Here is a 258-residue protein sequence, read N- to C-terminus: Indole-3-glycerol phosphate synthase (258 aa).

The protein belongs to the TrpC family.

The enzyme catalyses 1-(2-carboxyphenylamino)-1-deoxy-D-ribulose 5-phosphate + H(+) = (1S,2R)-1-C-(indol-3-yl)glycerol 3-phosphate + CO2 + H2O. The protein operates within amino-acid biosynthesis; L-tryptophan biosynthesis; L-tryptophan from chorismate: step 4/5. The protein is Indole-3-glycerol phosphate synthase of Campylobacter jejuni subsp. jejuni serotype O:23/36 (strain 81-176).